We begin with the raw amino-acid sequence, 1801 residues long: Sperm flagellar protein 2 (1801 aa).

Positions 1–105 (MSEILCQWLN…LLYQLYIALQ (105 aa)) constitute a Calponin-homology (CH) domain. 2 coiled-coil regions span residues 176–260 (EKFE…KDLQ) and 321–395 (AHEA…TKQA). A disordered region spans residues 632–659 (QDKNELTDTQVPGEAAPQKEGTKSSDFE). 2 coiled-coil regions span residues 722–748 (NQAK…KAQM) and 869–895 (ATEV…SAVS). Composition is skewed to basic and acidic residues over residues 883–892 (LEEKETEKKS) and 909–918 (EAEKEKEVHQ). The interval 883-949 (LEEKETEKKS…KISVKKSPID (67 aa)) is disordered. Residues 1051–1077 (EDLWEDEETKAELHQRVNDLRDRLWDI) are a coiled coil. Basic and acidic residues-rich tracts occupy residues 1233-1250 (RLAE…KEKS) and 1261-1295 (KEKE…AEKK). Disordered regions lie at residues 1233–1304 (RLAE…SPVV), 1651–1695 (KTSI…NANT), and 1781–1801 (SEHA…DEKK). Positions 1252-1286 (QSGTNKKAKKEKEQAKKEKEQAKKEKEQAKKEKEP) form a coiled coil. The interval 1305–1657 (EVSPVTITPE…TAEKTSISSV (353 aa)) is interaction with IFT20. Residues 1665-1695 (EAEENSTREELKEEKDERDQKEEEIPENANT) adopt a coiled-coil conformation. Residues 1669-1687 (NSTREELKEEKDERDQKEE) are compositionally biased toward basic and acidic residues.

In terms of assembly, interacts (via C-terminus) with IFT20. Interacts with DYNC1I2. Predominantly expressed in ciliated tissues such as lung, trachea, testis, brain, and at lower levels in kidney and spleen.

Its subcellular location is the cell projection. It localises to the cilium. The protein resides in the flagellum. The protein localises to the cytoplasm. It is found in the golgi apparatus. Required for correct axoneme development in spermatozoa. Important for normal development of the manchette and sperm head morphology. Essential for male fertility. Plays a role in localization of the intraflagellar transport protein IFT20 to the manchette, suggesting function as an adapter for dynein-mediated protein transport during spermatogenesis. Also plays a role in bone growth where it seems to be required for normal osteoblast differentiation. In Rattus norvegicus (Rat), this protein is Sperm flagellar protein 2 (Spef2).